The primary structure comprises 309 residues: CDK-activating kinase assembly factor MAT1 (309 aa).

The RING-type zinc finger occupies 6–50 (CPRCKTTKYRNPSLKLMVNVCGHTLCESCVELLFVRGSGSCQECD). The UIM domain maps to 142–161 (REQEELEEALEMEKHENEQR).

Associates with CDK7 and cyclin H.

It localises to the nucleus. In terms of biological role, stabilizes the cyclin H-CDK7 complex to form a functional CDK-activating kinase (CAK) enzymatic complex. The chain is CDK-activating kinase assembly factor MAT1 (mnat1) from Xenopus laevis (African clawed frog).